The following is a 93-amino-acid chain: Conotoxin Mr105 (93 aa).

An N-terminal signal peptide occupies residues 1–22 (MQRGAVLLGVVALLVLWPQAGA). Residues 23 to 33 (ELYDVNDPDVR) constitute a propeptide that is removed on maturation.

This sequence belongs to the F superfamily. Post-translationally, contains 4 disulfide bonds. As to expression, expressed by the venom duct.

The protein resides in the secreted. This is Conotoxin Mr105 from Conus marmoreus (Marble cone).